The primary structure comprises 430 residues: Tol-Pal system protein TolB (430 aa).

A signal peptide spans 1–19 (MKKQIFFTLILLISGLARA).

Belongs to the TolB family. In terms of assembly, the Tol-Pal system is composed of five core proteins: the inner membrane proteins TolA, TolQ and TolR, the periplasmic protein TolB and the outer membrane protein Pal. They form a network linking the inner and outer membranes and the peptidoglycan layer.

The protein resides in the periplasm. Functionally, part of the Tol-Pal system, which plays a role in outer membrane invagination during cell division and is important for maintaining outer membrane integrity. The sequence is that of Tol-Pal system protein TolB from Hahella chejuensis (strain KCTC 2396).